A 135-amino-acid chain; its full sequence is Phosphoribosyl-AMP cyclohydrolase (135 aa).

D78 serves as a coordination point for Mg(2+). C79 is a Zn(2+) binding site. Residues D80 and D82 each coordinate Mg(2+). Positions 96 and 103 each coordinate Zn(2+).

Belongs to the PRA-CH family. In terms of assembly, homodimer. Mg(2+) serves as cofactor. Zn(2+) is required as a cofactor.

Its subcellular location is the cytoplasm. The enzyme catalyses 1-(5-phospho-beta-D-ribosyl)-5'-AMP + H2O = 1-(5-phospho-beta-D-ribosyl)-5-[(5-phospho-beta-D-ribosylamino)methylideneamino]imidazole-4-carboxamide. The protein operates within amino-acid biosynthesis; L-histidine biosynthesis; L-histidine from 5-phospho-alpha-D-ribose 1-diphosphate: step 3/9. Functionally, catalyzes the hydrolysis of the adenine ring of phosphoribosyl-AMP. The polypeptide is Phosphoribosyl-AMP cyclohydrolase (Cupriavidus metallidurans (strain ATCC 43123 / DSM 2839 / NBRC 102507 / CH34) (Ralstonia metallidurans)).